A 380-amino-acid chain; its full sequence is Protein trichome birefringence-like 38 (380 aa).

A helical; Signal-anchor for type II membrane protein transmembrane segment spans residues 7-29 (SLLLLFLPLLTVTILSGVEQAFA). Residues 134 to 136 (GDS) carry the GDS motif motif. The short motif at 357–371 (DCSHWCLPGLPDTWN) is the DCXHWCLPGXXDXWN motif element.

It belongs to the PC-esterase family. TBL subfamily.

The protein localises to the membrane. Its function is as follows. May act as a bridging protein that binds pectin and other cell wall polysaccharides. Probably involved in maintaining esterification of pectins. May be involved in the specific O-acetylation of cell wall polymers. This is Protein trichome birefringence-like 38 (TBL38) from Arabidopsis thaliana (Mouse-ear cress).